A 529-amino-acid polypeptide reads, in one-letter code: G-protein coupled receptor 161 (529 aa).

At 1–30 (MSLNSSLSCRKELSNLTEEEGGEGGVIITQ) the chain is on the extracellular side. 2 N-linked (GlcNAc...) asparagine glycosylation sites follow: Asn-4 and Asn-15. Residues 31 to 51 (FIAIIVITIFVCLGNLVIVVT) form a helical membrane-spanning segment. Over 52–64 (LYKKSYLLTLSNK) the chain is Cytoplasmic. A helical membrane pass occupies residues 65-85 (FVFSLTLSNFLLSVLVLPFVV). The Extracellular portion of the chain corresponds to 86–101 (TSSIRREWIFGVVWCN). Cys-100 and Cys-178 form a disulfide bridge. Residues 102–123 (FSALLYLLISSASMLTLGVIAI) form a helical membrane-spanning segment. The Cytoplasmic segment spans residues 124–143 (DRYYAVLYPMVYPMKITGNR). A helical transmembrane segment spans residues 144-164 (AVMALVYIWLHSLIGCLPPLF). Over 165-190 (GWSSVEFDEFKWMCVAAWHREPGYTA) the chain is Extracellular. The chain crosses the membrane as a helical span at residues 191–211 (FWQIWCALFPFLVMLVCYGFI). The Cytoplasmic portion of the chain corresponds to 212–269 (FRVARVKARKVHCGTVVIVEEDAQRTGRKNSSTSTSSSGSRRNAFQGVVYSANQCKAL). The helical transmembrane segment at 270-290 (ITILVVLGAFMVTWGPYMVVI) threads the bilayer. Residues 291-306 (ASEALWGKSSVSPSLE) lie on the Extracellular side of the membrane. A helical membrane pass occupies residues 307–327 (TWATWLSFASAVCHPLIYGLW). At 328-529 (NKTVRKELLG…EGDVLAAEQR (202 aa)) the chain is on the cytoplasmic side.

This sequence belongs to the G-protein coupled receptor 1 family.

Its subcellular location is the cell projection. The protein resides in the cilium membrane. It is found in the cell membrane. Functionally, key negative regulator of Shh signaling, which promotes the processing of GLI3 into GLI3R during neural tube development. Recruited by TULP3 and the IFT-A complex to primary cilia and acts as a regulator of the PKA-dependent basal repression machinery in Shh signaling by increasing cAMP levels, leading to promote the PKA-dependent processing of GLI3 into GLI3R and repress the Shh signaling. In presence of SHH, it is removed from primary cilia and is internalized into recycling endosomes, preventing its activity and allowing activation of the Shh signaling. Its ligand is unknown. This is G-protein coupled receptor 161 (GPR161) from Homo sapiens (Human).